A 440-amino-acid polypeptide reads, in one-letter code: 3-phosphoshikimate 1-carboxyvinyltransferase (440 aa).

Residues lysine 28, serine 29, and arginine 33 each coordinate 3-phosphoshikimate. Lysine 28 lines the phosphoenolpyruvate pocket. Phosphoenolpyruvate is bound by residues glycine 98 and arginine 126. Residues serine 171, glutamine 173, aspartate 318, and lysine 345 each contribute to the 3-phosphoshikimate site. Glutamine 173 contacts phosphoenolpyruvate. Aspartate 318 functions as the Proton acceptor in the catalytic mechanism. Phosphoenolpyruvate-binding residues include arginine 349 and arginine 391.

The protein belongs to the EPSP synthase family. Monomer.

The protein resides in the cytoplasm. It carries out the reaction 3-phosphoshikimate + phosphoenolpyruvate = 5-O-(1-carboxyvinyl)-3-phosphoshikimate + phosphate. The protein operates within metabolic intermediate biosynthesis; chorismate biosynthesis; chorismate from D-erythrose 4-phosphate and phosphoenolpyruvate: step 6/7. Catalyzes the transfer of the enolpyruvyl moiety of phosphoenolpyruvate (PEP) to the 5-hydroxyl of shikimate-3-phosphate (S3P) to produce enolpyruvyl shikimate-3-phosphate and inorganic phosphate. The sequence is that of 3-phosphoshikimate 1-carboxyvinyltransferase from Anaeromyxobacter sp. (strain K).